Reading from the N-terminus, the 64-residue chain is Large ribosomal subunit protein bL33c (64 aa).

Belongs to the bacterial ribosomal protein bL33 family.

It is found in the plastid. It localises to the chloroplast. This chain is Large ribosomal subunit protein bL33c (rpl33), found in Cyanidium caldarium (Red alga).